The following is an 89-amino-acid chain: MKFLEKGVYKIFGAVILVSMIGALVAEPIALGDAGLYYQYYVGDIDTAQQCYLVAADSAITGAAISAALGPAGLASGVFTVVFSTTVLA.

The next 2 helical transmembrane spans lie at 11–31 (IFGA…PIAL) and 63–83 (AAIS…TVVF).

It is found in the cell membrane. This is an uncharacterized protein from Methanocaldococcus jannaschii (strain ATCC 43067 / DSM 2661 / JAL-1 / JCM 10045 / NBRC 100440) (Methanococcus jannaschii).